A 460-amino-acid polypeptide reads, in one-letter code: Cysteine--tRNA ligase (460 aa).

Cys28 is a Zn(2+) binding site. The 'HIGH' region signature appears at 30 to 40; sequence MTVYDYCHLGH. The Zn(2+) site is built by Cys209, His234, and Glu238. The short motif at 266–270 is the 'KMSKS' region element; sequence KMSKS. An ATP-binding site is contributed by Lys269.

Belongs to the class-I aminoacyl-tRNA synthetase family. Monomer. Zn(2+) is required as a cofactor.

It is found in the cytoplasm. It carries out the reaction tRNA(Cys) + L-cysteine + ATP = L-cysteinyl-tRNA(Cys) + AMP + diphosphate. This Pseudomonas entomophila (strain L48) protein is Cysteine--tRNA ligase.